The following is a 181-amino-acid chain: ATP synthase subunit delta (181 aa).

This sequence belongs to the ATPase delta chain family. As to quaternary structure, F-type ATPases have 2 components, F(1) - the catalytic core - and F(0) - the membrane proton channel. F(1) has five subunits: alpha(3), beta(3), gamma(1), delta(1), epsilon(1). F(0) has three main subunits: a(1), b(2) and c(10-14). The alpha and beta chains form an alternating ring which encloses part of the gamma chain. F(1) is attached to F(0) by a central stalk formed by the gamma and epsilon chains, while a peripheral stalk is formed by the delta and b chains.

It localises to the cell inner membrane. Its function is as follows. F(1)F(0) ATP synthase produces ATP from ADP in the presence of a proton or sodium gradient. F-type ATPases consist of two structural domains, F(1) containing the extramembraneous catalytic core and F(0) containing the membrane proton channel, linked together by a central stalk and a peripheral stalk. During catalysis, ATP synthesis in the catalytic domain of F(1) is coupled via a rotary mechanism of the central stalk subunits to proton translocation. Functionally, this protein is part of the stalk that links CF(0) to CF(1). It either transmits conformational changes from CF(0) to CF(1) or is implicated in proton conduction. The sequence is that of ATP synthase subunit delta from Chlorobium limicola (strain DSM 245 / NBRC 103803 / 6330).